The sequence spans 102 residues: MSSPPEGKLETKAGHPPAVKAGGMRIVQKHPHSGDTREEKDKDDQEWESPSPPKPTVFISGVIARGDKDFPPAAAQVAHQKPHASIDRHPSPRTQHIQQPRK.

The segment at 1-102 is disordered; it reads MSSPPEGKLE…RTQHIQQPRK (102 aa). Ser2 is subject to N-acetylserine. Position 3 is a phosphoserine; by MTOR (Ser3). N6-acetyllysine is present on Lys29. A compositionally biased stretch (basic and acidic residues) spans 32-43; it reads HSGDTREEKDKD. Residue Ser49 is modified to Phosphoserine. Residue Ser51 is modified to Phosphoserine; by MTOR. The residue at position 91 (Ser91) is a Phosphoserine. The span at 92–102 shows a compositional bias: polar residues; sequence PRTQHIQQPRK.

It belongs to the DAP-DAPL1 family. As to quaternary structure, associates with ribosomes; inhibiting translation. Interacts with eiF5a (EIF5A and EIF5A2); inhibiting translation. In terms of processing, phosphorylated. Phosphorylation by MTOR inhibits the suppressive activity of DAP toward autophagy.

Its function is as follows. Ribosome-binding protein involved in ribosome hibernation, a process during which ribosomes are stabilized in an inactive state and preserved from proteasomal degradation. Acts via its association with eiF5a (EIF5A and EIF5A2) at the polypeptide exit tunnel of the ribosome, preventing mRNA translation. Involved in ribosome hibernation in the mature oocyte by preventing mRNA translation, leading to ribosome inactivation. Ribosomes, which are produced in large quantities during oogenesis, are stored and translationally repressed in the oocyte and early embryo. Also acts as a negative regulator of autophagy. Involved in mediating interferon-gamma-induced cell death. The protein is Death-associated protein 1 (DAP) of Bos taurus (Bovine).